A 953-amino-acid chain; its full sequence is Isoleucine--tRNA ligase (953 aa).

Positions 57–67 match the 'HIGH' region motif; that stretch reads PYANGDIHIGH. Glutamate 582 provides a ligand contact to L-isoleucyl-5'-AMP. A 'KMSKS' region motif is present at residues 623-627; the sequence is KMSKS. Lysine 626 serves as a coordination point for ATP. Zn(2+) is bound by residues cysteine 916, cysteine 919, cysteine 936, and cysteine 939.

This sequence belongs to the class-I aminoacyl-tRNA synthetase family. IleS type 1 subfamily. Monomer. The cofactor is Zn(2+).

The protein localises to the cytoplasm. It catalyses the reaction tRNA(Ile) + L-isoleucine + ATP = L-isoleucyl-tRNA(Ile) + AMP + diphosphate. In terms of biological role, catalyzes the attachment of isoleucine to tRNA(Ile). As IleRS can inadvertently accommodate and process structurally similar amino acids such as valine, to avoid such errors it has two additional distinct tRNA(Ile)-dependent editing activities. One activity is designated as 'pretransfer' editing and involves the hydrolysis of activated Val-AMP. The other activity is designated 'posttransfer' editing and involves deacylation of mischarged Val-tRNA(Ile). In Bordetella petrii (strain ATCC BAA-461 / DSM 12804 / CCUG 43448), this protein is Isoleucine--tRNA ligase.